We begin with the raw amino-acid sequence, 288 residues long: HTH-type transcriptional regulator CzcR (288 aa).

In terms of domain architecture, HTH lysR-type spans 1–58 (MELRDLQIFQSVADQGSVSSAAKELNYVQSNVTARIKQLENELKTPLFYRHKRGMTLT). The segment at residues 18–37 (VSSAAKELNYVQSNVTARIK) is a DNA-binding region (H-T-H motif).

It belongs to the LysR transcriptional regulatory family.

In Bacillus cereus (strain ATCC 10987 / NRS 248), this protein is HTH-type transcriptional regulator CzcR (czcR).